The following is a 94-amino-acid chain: Parvalbumin beta 4 (94 aa).

The residue at position 1 (alanine 1) is an N-acetylalanine. 2 EF-hand domains span residues 36–63 and 67–94; these read FFAI…FSAG and LSDA…EFAA. Residues aspartate 41, aspartate 43, serine 45, phenylalanine 47, glutamate 49, glutamate 52, aspartate 80, aspartate 82, aspartate 84, methionine 86, and glutamate 91 each coordinate Ca(2+).

It belongs to the parvalbumin family.

Its function is as follows. In muscle, parvalbumin is thought to be involved in relaxation after contraction. It binds two calcium ions. The sequence is that of Parvalbumin beta 4 from Merluccius bilinearis (Silver hake).